The following is a 233-amino-acid chain: Probable GTP-binding protein EngB (233 aa).

Positions A23 to L209 constitute an EngB-type G domain. Residues G31–S38, G58–H62, D82–G85, T149–D152, and F188–S190 each bind GTP. Mg(2+)-binding residues include S38 and T60.

This sequence belongs to the TRAFAC class TrmE-Era-EngA-EngB-Septin-like GTPase superfamily. EngB GTPase family. Mg(2+) is required as a cofactor.

Functionally, necessary for normal cell division and for the maintenance of normal septation. The protein is Probable GTP-binding protein EngB of Ralstonia pickettii (strain 12J).